The sequence spans 77 residues: Probable [Fe-S]-dependent transcriptional repressor (77 aa).

Iron-sulfur cluster-binding residues include C54, C59, C62, and C68.

It belongs to the FeoC family.

In terms of biological role, may function as a transcriptional regulator that controls feoABC expression. The protein is Probable [Fe-S]-dependent transcriptional repressor of Proteus mirabilis (strain HI4320).